The chain runs to 382 residues: B3 domain-containing protein Os03g0622100 (382 aa).

The segment at residues 29-123 (CKHFLTYMVG…SFDVLIFDPS (95 aa)) is a DNA-binding region (TF-B3 1). Basic and acidic residues-rich tracts occupy residues 136–158 (RGFG…DKNG) and 193–202 (QDHREEKKEG). The interval 136–222 (RGFGREEKSA…EDVDKDGEDR (87 aa)) is disordered. The segment covering 203–218 (DDEDEDEDEDEDVDKD) has biased composition (acidic residues). Positions 261-363 (KVIHASHLLS…AGDRLRRRPR (103 aa)) form a DNA-binding region, TF-B3 2.

It localises to the nucleus. This chain is B3 domain-containing protein Os03g0622100, found in Oryza sativa subsp. japonica (Rice).